We begin with the raw amino-acid sequence, 335 residues long: Partner of xrn-2 protein 1 (335 aa).

The region spanning 7–91 (VEAEKKLWES…SYVKASAAKK (85 aa)) is the XRN2-binding (XTBD) domain. The interval 95–119 (VKTSDLEGASDESKKVKMEKSPSPV) is disordered. Positions 105-114 (DESKKVKMEK) are enriched in basic and acidic residues.

Interacts (via N-terminus) with xrn-2; the interaction is direct.

Its subcellular location is the nucleus. The protein localises to the nucleolus. It localises to the nucleoplasm. Functionally, plays a role in maintenance of steady-state concentration and turnover of microRNAs (miRNA) by degradation of mature miRNA in complex with the exoribonuclease xrn-2. Stabilizes and enhances the accumulation and activity of the exoribonuclease xrn-2, and thus contributes to miRNA turnover. This chain is Partner of xrn-2 protein 1, found in Caenorhabditis elegans.